A 344-amino-acid chain; its full sequence is Transcription factor JunB (344 aa).

Residues Lys4, Lys33, and Lys36 each participate in a glycyl lysine isopeptide (Lys-Gly) (interchain with G-Cter in SUMO2) cross-link. Residues 51–65 (KGPGARGPGPEGSGA) show a composition bias toward gly residues. Residues 51 to 75 (KGPGARGPGPEGSGAGSYFSGQGSD) are disordered. Residue Lys81 forms a Glycyl lysine isopeptide (Lys-Gly) (interchain with G-Cter in SUMO2) linkage. 2 positions are modified to phosphothreonine: Thr102 and Thr104. A Phosphoserine modification is found at Ser117. Residue Lys138 forms a Glycyl lysine isopeptide (Lys-Gly) (interchain with G-Cter in SUMO2) linkage. 2 disordered regions span residues 181-202 (NLSS…VGTG) and 237-257 (KEEP…PVSP). The segment covering 183-192 (SSYSPASAPS) has biased composition (low complexity). Residue Lys237 is modified to N6-acetyllysine; alternate. Lys237 is covalently cross-linked (Glycyl lysine isopeptide (Lys-Gly) (interchain with G-Cter in SUMO1); alternate). Lys237 participates in a covalent cross-link: Glycyl lysine isopeptide (Lys-Gly) (interchain with G-Cter in SUMO2); alternate. Over residues 237–250 (KEEPQTVPEARSRD) the composition is skewed to basic and acidic residues. A Phosphoserine modification is found at Ser248. Thr252 carries the phosphothreonine modification. Ser256 carries the phosphoserine modification. Positions 265 to 292 (RIKVERKRLRNRLAATKCRKRKLERIAR) are basic motif. In terms of domain architecture, bZIP spans 265–328 (RIKVERKRLR…AQLKQKVMTH (64 aa)). The segment at 293–321 (LEDKVKTLKAENAGLSSAAGLLREQVAQL) is leucine-zipper. Residue Lys340 forms a Glycyl lysine isopeptide (Lys-Gly) (interchain with G-Cter in SUMO2) linkage.

Belongs to the bZIP family. Jun subfamily. As to quaternary structure, binds DNA as a homodimer or as a heterodimer with another member of the Jun/Fos family. Component of an AP-1 transcription factor complex composed of JUN-FOS heterodimers. As part of the AP-1 transcription factor complex, forms heterodimers with FOSB, thereby binding to the AP-1 consensus sequence and stimulating transcription. Interacts with NFE2 (via its WW domains). Ubiquitinated by ITCH, leading to its degradation.

The protein localises to the nucleus. Its function is as follows. Transcription factor involved in regulating gene activity following the primary growth factor response. Binds to the DNA sequence 5'-TGA[GC]TCA-3'. Heterodimerizes with proteins of the FOS family to form an AP-1 transcription complex, thereby enhancing its DNA binding activity to an AP-1 consensus sequence 5'-TGA[GC]TCA-3' and enhancing its transcriptional activity. This Mus musculus (Mouse) protein is Transcription factor JunB (Junb).